The chain runs to 344 residues: L-rhamnose-proton symporter (344 aa).

10 consecutive transmembrane segments (helical) span residues 4–24, 38–58, 68–88, 101–121, 137–157, 175–195, 214–234, 259–279, 290–310, and 323–343; these read AITM…CFYA, WSVG…ALLL, FSLS…IGNI, MGIG…TPII, TLLG…AGQL, LVLA…MNAA, LPSY…FCFI, VLLS…YAWG, ISWM…GLVL, and VLSL…IGMA.

Belongs to the L-rhamnose transporter (TC 2.A.7.6) family.

Its subcellular location is the cell inner membrane. It catalyses the reaction L-rhamnopyranose(in) + H(+)(in) = L-rhamnopyranose(out) + H(+)(out). Functionally, uptake of L-rhamnose across the cytoplasmic membrane with the concomitant transport of protons into the cell (symport system). The protein is L-rhamnose-proton symporter of Escherichia coli O9:H4 (strain HS).